A 277-amino-acid polypeptide reads, in one-letter code: Putative phosphoenolpyruvate synthase regulatory protein (277 aa).

Residue 156 to 163 (GVSRAGKT) participates in ADP binding.

The protein belongs to the pyruvate, phosphate/water dikinase regulatory protein family. PSRP subfamily.

The catalysed reaction is [pyruvate, water dikinase] + ADP = [pyruvate, water dikinase]-phosphate + AMP + H(+). The enzyme catalyses [pyruvate, water dikinase]-phosphate + phosphate + H(+) = [pyruvate, water dikinase] + diphosphate. Its function is as follows. Bifunctional serine/threonine kinase and phosphorylase involved in the regulation of the phosphoenolpyruvate synthase (PEPS) by catalyzing its phosphorylation/dephosphorylation. The chain is Putative phosphoenolpyruvate synthase regulatory protein from Deinococcus radiodurans (strain ATCC 13939 / DSM 20539 / JCM 16871 / CCUG 27074 / LMG 4051 / NBRC 15346 / NCIMB 9279 / VKM B-1422 / R1).